A 659-amino-acid polypeptide reads, in one-letter code: Interferon-induced GTP-binding protein Mx2 (659 aa).

A Dynamin-type G domain is found at Asp65 to Pro338. The G1 motif stretch occupies residues Gly75–Ser82. GTP is bound at residue Gly75 to Ser82. Residues Val100–Arg102 are G2 motif. The G3 motif stretch occupies residues Asp176–Gly179. Residues Asp176 to Ile180 and Thr245 to Asp248 contribute to the GTP site. Residues Thr245–Asp248 are G4 motif. Positions Lys277 to Gly280 are G5 motif. Positions Glu547–Gln567 are disordered. The GED domain occupies Met571 to Gly659.

It belongs to the TRAFAC class dynamin-like GTPase superfamily. Dynamin/Fzo/YdjA family.

It localises to the cytoplasm. In terms of biological role, interferon-induced dynamin-like GTPase with antiviral activity against vesicular stomatitis virus (VSV). The polypeptide is Interferon-induced GTP-binding protein Mx2 (Mx2) (Rattus norvegicus (Rat)).